The chain runs to 252 residues: Phosphate import ATP-binding protein PstB 2 (252 aa).

Residues 6–247 enclose the ABC transporter domain; it reads ISINDLSVYF…PQHKETEDYI (242 aa). Position 38–45 (38–45) interacts with ATP; that stretch reads GPSGSGKS.

The protein belongs to the ABC transporter superfamily. Phosphate importer (TC 3.A.1.7) family. As to quaternary structure, the complex is composed of two ATP-binding proteins (PstB), two transmembrane proteins (PstC and PstA) and a solute-binding protein (PstS).

The protein resides in the cell membrane. It carries out the reaction phosphate(out) + ATP + H2O = ADP + 2 phosphate(in) + H(+). Its function is as follows. Part of the ABC transporter complex PstSACB involved in phosphate import. Responsible for energy coupling to the transport system. In Streptococcus thermophilus (strain CNRZ 1066), this protein is Phosphate import ATP-binding protein PstB 2.